The primary structure comprises 443 residues: POU domain, class 3, transcription factor 3-B (443 aa).

3 disordered regions span residues 21 to 40 (IVHS…VTSV), 100 to 150 (SPWS…AGAW), and 182 to 244 (NGML…PTSD). Positions 101–121 (PWSSSPVGMTGSPQQQDVKNN) are enriched in polar residues. A compositionally biased stretch (basic residues) spans 210 to 225 (SHHHHHHHQHQHHQQA). Positions 238–312 (EDTPTSDDLE…LLNKWLEEAD (75 aa)) constitute a POU-specific domain. Residue serine 317 is modified to Phosphoserine. A DNA-binding region (homeobox) is located at residues 330 to 389 (KRKKRTSIEVSVKGALESHFLKCPKPSAQEITSLADNLQLEKEVVRVWFCNRRQKEKRMT).

This sequence belongs to the POU transcription factor family. Class-3 subfamily. In terms of tissue distribution, predominantly expressed in the central nervous system.

It is found in the nucleus. Functionally, transcription factor that may play important roles in patterning the embryonic brain. This is POU domain, class 3, transcription factor 3-B (pou3f3b) from Danio rerio (Zebrafish).